We begin with the raw amino-acid sequence, 448 residues long: Probable glycine dehydrogenase (decarboxylating) subunit 1 (448 aa).

The protein belongs to the GcvP family. N-terminal subunit subfamily. In terms of assembly, the glycine cleavage system is composed of four proteins: P, T, L and H. In this organism, the P 'protein' is a heterodimer of two subunits.

It carries out the reaction N(6)-[(R)-lipoyl]-L-lysyl-[glycine-cleavage complex H protein] + glycine + H(+) = N(6)-[(R)-S(8)-aminomethyldihydrolipoyl]-L-lysyl-[glycine-cleavage complex H protein] + CO2. The glycine cleavage system catalyzes the degradation of glycine. The P protein binds the alpha-amino group of glycine through its pyridoxal phosphate cofactor; CO(2) is released and the remaining methylamine moiety is then transferred to the lipoamide cofactor of the H protein. In Caulobacter vibrioides (strain ATCC 19089 / CIP 103742 / CB 15) (Caulobacter crescentus), this protein is Probable glycine dehydrogenase (decarboxylating) subunit 1.